A 467-amino-acid chain; its full sequence is Fumarate hydratase class II (467 aa).

Substrate is bound by residues 98 to 100, Arg-126, 129 to 132, 139 to 141, and Thr-187; these read SGT, HPND, and SSN. His-188 serves as the catalytic Proton donor/acceptor. Ser-318 is an active-site residue. Residues Ser-319 and 324–326 contribute to the substrate site; that span reads KVN.

This sequence belongs to the class-II fumarase/aspartase family. Fumarase subfamily. In terms of assembly, homotetramer.

It localises to the cytoplasm. The enzyme catalyses (S)-malate = fumarate + H2O. Its pathway is carbohydrate metabolism; tricarboxylic acid cycle; (S)-malate from fumarate: step 1/1. Involved in the TCA cycle. Catalyzes the stereospecific interconversion of fumarate to L-malate. This Escherichia coli O157:H7 protein is Fumarate hydratase class II.